Consider the following 308-residue polypeptide: MRIAFMGTPDFAVPTLDALVAAGHELAAVYCQPPRPAGRGKALMPSPVQRRAEELGIPVRHPVTLRDADAQAVFAALALDVAVVAAYGLILPQPILDAPRHGCLNVHGSLLPRWRGAAPVQRAILAGDPTTGVTIMQMERGLDTGPMLATVETPVDGKTAGELTDELARSGAALMVEVLADLPAHPPVVQPEEGVTYAAKIDKAESRIDFAEAAGQIERQVRAFNPAPGAWFEHQGERIRILACEAVDRHGPEAPGAVIDDALTIACIDGAIRPTRVQRAGKAAMSAGELLRGFAIPAGTQLASPPRT.

109–112 (SLLP) contacts (6S)-5,6,7,8-tetrahydrofolate.

This sequence belongs to the Fmt family.

It carries out the reaction L-methionyl-tRNA(fMet) + (6R)-10-formyltetrahydrofolate = N-formyl-L-methionyl-tRNA(fMet) + (6S)-5,6,7,8-tetrahydrofolate + H(+). Attaches a formyl group to the free amino group of methionyl-tRNA(fMet). The formyl group appears to play a dual role in the initiator identity of N-formylmethionyl-tRNA by promoting its recognition by IF2 and preventing the misappropriation of this tRNA by the elongation apparatus. The protein is Methionyl-tRNA formyltransferase of Rhizorhabdus wittichii (strain DSM 6014 / CCUG 31198 / JCM 15750 / NBRC 105917 / EY 4224 / RW1) (Sphingomonas wittichii).